The sequence spans 87 residues: Acylphosphatase (87 aa).

An Acylphosphatase-like domain is found at 2 to 87 (RLTALVSGHV…ETGLREFHIY (86 aa)). Catalysis depends on residues Arg-17 and Asn-35.

The protein belongs to the acylphosphatase family.

The catalysed reaction is an acyl phosphate + H2O = a carboxylate + phosphate + H(+). This is Acylphosphatase (acyP) from Deinococcus radiodurans (strain ATCC 13939 / DSM 20539 / JCM 16871 / CCUG 27074 / LMG 4051 / NBRC 15346 / NCIMB 9279 / VKM B-1422 / R1).